We begin with the raw amino-acid sequence, 227 residues long: Probable proteasome subunit beta type-2 (227 aa).

The propeptide at 1-6 (MITKTG) is removed in mature form. The active-site Nucleophile is the Thr7.

The protein belongs to the peptidase T1B family. The 26S proteasome consists of a 20S proteasome core and two 19S regulatory subunits. The 20S proteasome core is composed of 28 subunits that are arranged in four stacked rings, resulting in a barrel-shaped structure. The two end rings are each formed by seven alpha subunits, and the two central rings are each formed by seven beta subunits. The catalytic chamber with the active sites is on the inside of the barrel.

It is found in the cytoplasm. It localises to the nucleus. It carries out the reaction Cleavage of peptide bonds with very broad specificity.. In terms of biological role, the proteasome degrades poly-ubiquitinated proteins in the cytoplasm and in the nucleus. It is essential for the regulated turnover of proteins and for the removal of misfolded proteins. The proteasome is a multicatalytic proteinase complex that is characterized by its ability to cleave peptides with Arg, Phe, Tyr, Leu, and Glu adjacent to the leaving group at neutral or slightly basic pH. It has an ATP-dependent proteolytic activity. This chain is Probable proteasome subunit beta type-2 (PUP1), found in Encephalitozoon cuniculi (strain GB-M1) (Microsporidian parasite).